Reading from the N-terminus, the 260-residue chain is MADS-box transcription factor 29 (260 aa).

Residues 1–61 (MGRGKIEIKR…GKMFEYCSPT (61 aa)) form the MADS-box domain. A K-box domain is found at 85 to 175 (DQQIFVEMTR…CRMINENHHQ (91 aa)).

As to expression, expressed in developing seeds.

It localises to the nucleus. Probable transcription factor. This Oryza sativa subsp. japonica (Rice) protein is MADS-box transcription factor 29 (MADS29).